The primary structure comprises 276 residues: Aquaporin-6 (276 aa).

The Cytoplasmic portion of the chain corresponds to 1–22 (MEPGLCNRAYLLVGGLWTAISK). A helical transmembrane segment spans residues 23–43 (ALFAEFLATGLYVFFGVGSVL). At 44 to 51 (PWPVALPS) the chain is on the extracellular side. The helical transmembrane segment at 52–70 (VLQVAITFNLATATAVQIS) threads the bilayer. Over 71 to 75 (WKTSG) the chain is Cytoplasmic. Residues 76-85 (AHANPAVTLA) constitute an intramembrane region (discontinuously helical). Residues 79–81 (NPA) carry the NPA 1 motif. Over 86–96 (YLVGSHISLPR) the chain is Cytoplasmic. Residues 97–118 (AVAYIAAQLAGATVGAALLYGV) form a helical membrane-spanning segment. Topologically, residues 119–138 (TPGGVRETLGVNVVHNSTST) are extracellular. Residue N134 is glycosylated (N-linked (GlcNAc...) asparagine). A helical transmembrane segment spans residues 139–159 (GQAVAVELVLTLQLVLCVFAS). The Cytoplasmic segment spans residues 160–165 (MDSRQT). Residues 166–185 (LGSPAAMIGTSVALGHLIGI) traverse the membrane as a helical segment. The Extracellular segment spans residues 186-189 (YFTG). Residues 190-202 (CSMNPARSFGPAV) constitute an intramembrane region (discontinuously helical). An NPA 2 motif is present at residues 193–195 (NPA). At 203–210 (IVGKFAVH) the chain is on the extracellular side. Residues 211-231 (WIFWVGPLTGAVLASLIYNFI) form a helical membrane-spanning segment. Topologically, residues 232 to 276 (LFPDTKTVAQRLAILVGTTKVEKVVDLEPQKKESQTNSEDTEVSV) are cytoplasmic.

Belongs to the MIP/aquaporin (TC 1.A.8) family. In terms of assembly, homotetramer; each monomer provides an independent solute pore. N-glycosylated. Kidney.

It is found in the cytoplasmic vesicle membrane. It catalyses the reaction nitrate(in) = nitrate(out). It carries out the reaction iodide(out) = iodide(in). The catalysed reaction is bromide(in) = bromide(out). The enzyme catalyses chloride(in) = chloride(out). It catalyses the reaction Na(+)(in) = Na(+)(out). It carries out the reaction H2O(in) = H2O(out). The catalysed reaction is CO2(out) = CO2(in). The enzyme catalyses NH4(+)(in) = NH4(+)(out). With respect to regulation, activated by mercury and pH-gated, anion permeability is observed at pH 5.5 and increases markedly at pH 4.0. Selectivity for chloride increases at low pH. The water channel activity is stimulated by mercury by opposition to other aquaporins. Its function is as follows. Aquaporins form homotetrameric transmembrane channels, with each monomer independently mediating water transport across the plasma membrane along its osmotic gradient. Unlike classical aquaporins, AQP6 is an intracellular channel with selective anion permeability, particularly for nitrate, and exhibits very low water permeability. It may also facilitate the transport of gases, such as CO2 and NH4(+), as demonstrated in vitro. The protein is Aquaporin-6 of Rattus norvegicus (Rat).